The primary structure comprises 24 residues: Humanin-like 1 (24 aa).

Belongs to the humanin family. Highly expressed in the kidney, heart muscle and testis.

It localises to the secreted. It is found in the cytoplasm. In terms of biological role, plays a role as a neuroprotective and antiapoptotic factor. This Homo sapiens (Human) protein is Humanin-like 1.